A 175-amino-acid chain; its full sequence is Large ribosomal subunit protein uL15 (175 aa).

2 disordered regions span residues 1 to 65 (MSTL…LPKF) and 155 to 175 (PESA…QPKA). A compositionally biased stretch (basic residues) spans 12–21 (RSWHRKKRVG). The segment covering 22–38 (RGQGSGLGKTAGRGGKG) has biased composition (gly residues). Residues 160-169 (KAHAGKGVKA) are compositionally biased toward low complexity.

It belongs to the universal ribosomal protein uL15 family. As to quaternary structure, part of the 50S ribosomal subunit.

Functionally, binds to the 23S rRNA. This chain is Large ribosomal subunit protein uL15, found in Myxococcus xanthus (strain DK1622).